The primary structure comprises 107 residues: YcgL domain-containing protein Pcryo_0807 (107 aa).

The YcgL domain maps to 1–95; that stretch reads MHCDIYKFLK…QDVMRRQAEL (95 aa).

This Psychrobacter cryohalolentis (strain ATCC BAA-1226 / DSM 17306 / VKM B-2378 / K5) protein is YcgL domain-containing protein Pcryo_0807.